The primary structure comprises 454 residues: Bifunctional protein GlmU (454 aa).

The pyrophosphorylase stretch occupies residues 1-226 (MALNVVILAA…AIEVEGANNR (226 aa)). UDP-N-acetyl-alpha-D-glucosamine-binding positions include 8 to 11 (LAAG), K22, Q73, 78 to 79 (GT), 100 to 102 (YGD), G137, E151, N166, and N224. D102 is a binding site for Mg(2+). N224 contacts Mg(2+). Residues 227-247 (VQLAQLERAYQAREAEKLMIA) are linker. An N-acetyltransferase region spans residues 248 to 454 (GANLRDPSRI…GWQRPVKIKK (207 aa)). UDP-N-acetyl-alpha-D-glucosamine is bound by residues R330 and K348. Catalysis depends on H360, which acts as the Proton acceptor. 2 residues coordinate UDP-N-acetyl-alpha-D-glucosamine: Y363 and N374. Acetyl-CoA is bound by residues A377, 383–384 (NY), S402, A420, and R437.

The protein in the N-terminal section; belongs to the N-acetylglucosamine-1-phosphate uridyltransferase family. This sequence in the C-terminal section; belongs to the transferase hexapeptide repeat family. As to quaternary structure, homotrimer. It depends on Mg(2+) as a cofactor.

The protein resides in the cytoplasm. It catalyses the reaction alpha-D-glucosamine 1-phosphate + acetyl-CoA = N-acetyl-alpha-D-glucosamine 1-phosphate + CoA + H(+). The catalysed reaction is N-acetyl-alpha-D-glucosamine 1-phosphate + UTP + H(+) = UDP-N-acetyl-alpha-D-glucosamine + diphosphate. It participates in nucleotide-sugar biosynthesis; UDP-N-acetyl-alpha-D-glucosamine biosynthesis; N-acetyl-alpha-D-glucosamine 1-phosphate from alpha-D-glucosamine 6-phosphate (route II): step 2/2. Its pathway is nucleotide-sugar biosynthesis; UDP-N-acetyl-alpha-D-glucosamine biosynthesis; UDP-N-acetyl-alpha-D-glucosamine from N-acetyl-alpha-D-glucosamine 1-phosphate: step 1/1. The protein operates within bacterial outer membrane biogenesis; LPS lipid A biosynthesis. Its function is as follows. Catalyzes the last two sequential reactions in the de novo biosynthetic pathway for UDP-N-acetylglucosamine (UDP-GlcNAc). The C-terminal domain catalyzes the transfer of acetyl group from acetyl coenzyme A to glucosamine-1-phosphate (GlcN-1-P) to produce N-acetylglucosamine-1-phosphate (GlcNAc-1-P), which is converted into UDP-GlcNAc by the transfer of uridine 5-monophosphate (from uridine 5-triphosphate), a reaction catalyzed by the N-terminal domain. The polypeptide is Bifunctional protein GlmU (Shewanella sp. (strain MR-4)).